Here is a 105-residue protein sequence, read N- to C-terminus: Large ribosomal subunit protein uL24 (105 aa).

It belongs to the universal ribosomal protein uL24 family. In terms of assembly, part of the 50S ribosomal subunit.

Functionally, one of two assembly initiator proteins, it binds directly to the 5'-end of the 23S rRNA, where it nucleates assembly of the 50S subunit. One of the proteins that surrounds the polypeptide exit tunnel on the outside of the subunit. This Dictyoglomus turgidum (strain DSM 6724 / Z-1310) protein is Large ribosomal subunit protein uL24.